Consider the following 518-residue polypeptide: Macrophage receptor MARCO (518 aa).

Topologically, residues 1–48 (MGSKELLKEEDFLGSTEDRADFDQAMFPVMETFEINDPVPKKRNGGTF) are cytoplasmic. Residues 49-69 (CMAVMAIHLILLTAGTALLLI) form a helical; Signal-anchor for type II membrane protein membrane-spanning segment. Over 70–518 (QVLNLQEQLQ…HNEDAGVECS (449 aa)) the chain is Extracellular. Residues Asn-87 and Asn-138 are each glycosylated (N-linked (GlcNAc...) asparagine). The interval 147–426 (QIKGERGSPG…GESFQRVRIM (280 aa)) is disordered. Positions 149–418 (KGERGSPGPK…QKGEKGQKGE (270 aa)) constitute a Collagen-like domain. The span at 154 to 163 (SPGPKGAPGA) shows a compositional bias: low complexity. A compositionally biased stretch (basic and acidic residues) spans 239–250 (KGEHGTKGDKGD). Composition is skewed to low complexity over residues 293-314 (PGVK…QGAP) and 325-344 (RTGL…PGIA). A compositionally biased stretch (basic and acidic residues) spans 410–421 (KGEKGQKGESFQ). In terms of domain architecture, SRCR spans 423 to 518 (VRIMGGTNRG…HNEDAGVECS (96 aa)). 3 disulfides stabilise this stretch: Cys-446–Cys-507, Cys-459–Cys-517, and Cys-487–Cys-497.

Homotrimer; disulfide-linked. Trimers may assemble in larger oligomers thus resulting in the creation of a large surface capable of interacting with very large ligands. N-glycosylated. As to expression, expressed in subpopulations of macrophages in the spleen and the medullary cord of lymph nodes (at protein level).

It localises to the cell membrane. Pattern recognition receptor (PRR) which binds Gram-positive and Gram-negative bacteria. Also plays a role in binding of unopsonized particles by alveolar macrophages. Binds to the secretoglobin SCGB3A2. The chain is Macrophage receptor MARCO (Marco) from Mus musculus (Mouse).